The following is a 1608-amino-acid chain: DNA-directed RNA polymerase III subunit rpc2 (1608 aa).

Zn(2+) is bound by residues C1557, C1560, C1569, and C1572. Residues 1557-1572 (CKNCGFLGYEGYCQYC) form a C4-type zinc finger.

The protein belongs to the RNA polymerase beta chain family. As to quaternary structure, component of the RNA polymerase III (Pol III) complex. This protein undergoes a protein self splicing that involves a post-translational excision of the intervening region (intein) followed by peptide ligation.

It is found in the nucleus. It carries out the reaction RNA(n) + a ribonucleoside 5'-triphosphate = RNA(n+1) + diphosphate. Its function is as follows. DNA-dependent RNA polymerase catalyzes the transcription of DNA into RNA using the four ribonucleoside triphosphates as substrates. Second largest core component of RNA polymerase III which synthesizes small RNAs, such as 5S rRNA and tRNAs. Proposed to contribute to the polymerase catalytic activity and forms the polymerase active center together with the largest subunit. Pol III is composed of mobile elements and rpc2 is part of the core element with the central large cleft and probably a clamp element that moves to open and close the cleft. This chain is DNA-directed RNA polymerase III subunit rpc2 (polr3b), found in Dictyostelium discoideum (Social amoeba).